Consider the following 388-residue polypeptide: 4-hydroxycoumarin synthase 2 (388 aa).

The active site involves Cys-159.

It belongs to the thiolase-like superfamily. Chalcone/stilbene synthases family. In terms of assembly, homodimer.

The catalysed reaction is 2-hydroxybenzoyl-CoA + malonyl-CoA = 4-hydroxycoumarin + CO2 + 2 CoA. Functionally, type III polyketide synthase involved preferentially in the biosynthesis of 4-hydroxycoumarin from salicoyl-CoA. Can also use benzoyl-CoA and malonyl-CoA to produce 3,5-dihydroxybiphenyl as a major product and benzoyldiacetic acid lactone as a minor side product. Can also use m-hydroxybenzoyl-CoA as substrate, producing m-hydroxybenzoyl diacetic acid lactone as a derailment product. No activity with p-hydroxybenzoyl-CoA, CoA-linked cinnamic acids or acetyl-CoA. This Sorbus aucuparia (European mountain ash) protein is 4-hydroxycoumarin synthase 2 (BIS3).